The chain runs to 174 residues: MAIVGLFYGSDTGNTENIAKQIQKQLGSDLIDIRDIAKSSKEDIEAYDFLLFGIPTWYYGEAQADWDDFFPTLEEIDFTDKLVGIFGCGDQEDYADYFCDAIGTVRDIIEPHGAIVVGNWPTEGYNFEASKALLEDGTFIGLCIDEDRQPELTAERVEKWCKQIYDEMCLAELA.

In terms of domain architecture, Flavodoxin-like spans 4-165 (VGLFYGSDTG…RVEKWCKQIY (162 aa)).

Belongs to the flavodoxin family. The cofactor is FMN.

Low-potential electron donor to a number of redox enzymes. The polypeptide is Flavodoxin (fldA) (Haemophilus influenzae (strain ATCC 51907 / DSM 11121 / KW20 / Rd)).